The chain runs to 267 residues: uncharacterized protein (267 aa).

The interval 1–55 (MTEERKETFEEEINQSERIDADEEPLSRMSRKASRQSKQKQKQKQKPRQERGEST) is disordered. Residues 9–24 (FEEEINQSERIDADEE) are compositionally biased toward acidic residues. Residues 29 to 46 (MSRKASRQSKQKQKQKQK) show a composition bias toward basic residues. 5 helical membrane passes run 93-115 (YKYG…WFQL), 135-157 (GFLV…IWAV), 173-195 (AVLG…FAIV), 199-221 (MLTV…LYVQ), and 234-256 (YIYC…WPFI).

It is found in the cell membrane. This is an uncharacterized protein from Bacillus subtilis (strain 168).